Consider the following 473-residue polypeptide: Photosystem II CP43 reaction center protein (473 aa).

Positions 1–14 are excised as a propeptide; sequence MKILYSLRRFYHVE. Thr15 is modified (N-acetylthreonine). A Phosphothreonine modification is found at Thr15. A run of 5 helical transmembrane segments spans residues 69–93, 134–155, 178–200, 255–275, and 291–312; these read LFEV…PHLA, LLGP…KDRN, KALY…RKIT, KPFA…LSYS, and WFNN…ASQA. Glu367 serves as a coordination point for [CaMn4O5] cluster. Residues 447–471 form a helical membrane-spanning segment; the sequence is RARAAAAGFEKGIDRDLEPVLYMTP.

It belongs to the PsbB/PsbC family. PsbC subfamily. PSII is composed of 1 copy each of membrane proteins PsbA, PsbB, PsbC, PsbD, PsbE, PsbF, PsbH, PsbI, PsbJ, PsbK, PsbL, PsbM, PsbT, PsbX, PsbY, PsbZ, Psb30/Ycf12, at least 3 peripheral proteins of the oxygen-evolving complex and a large number of cofactors. It forms dimeric complexes. Binds multiple chlorophylls and provides some of the ligands for the Ca-4Mn-5O cluster of the oxygen-evolving complex. It may also provide a ligand for a Cl- that is required for oxygen evolution. PSII binds additional chlorophylls, carotenoids and specific lipids. is required as a cofactor.

The protein localises to the plastid. It is found in the chloroplast thylakoid membrane. In terms of biological role, one of the components of the core complex of photosystem II (PSII). It binds chlorophyll and helps catalyze the primary light-induced photochemical processes of PSII. PSII is a light-driven water:plastoquinone oxidoreductase, using light energy to abstract electrons from H(2)O, generating O(2) and a proton gradient subsequently used for ATP formation. This Oryza nivara (Indian wild rice) protein is Photosystem II CP43 reaction center protein.